A 251-amino-acid chain; its full sequence is uncharacterized protein (251 aa).

Residues 1–19 (MRYLKRITIYISLLILVSG) form the signal peptide. The N-palmitoyl cysteine moiety is linked to residue C20. A lipid anchor (S-diacylglycerol cysteine) is attached at C20.

The protein belongs to the staphylococcal tandem lipoprotein family.

Its subcellular location is the cell membrane. This is an uncharacterized protein from Staphylococcus epidermidis (strain ATCC 12228 / FDA PCI 1200).